We begin with the raw amino-acid sequence, 363 residues long: Disease resistance protein RBA1 (363 aa).

In terms of domain architecture, TIR spans Pro-12–Leu-175. Residues Arg-21–Arg-26 and Gly-53 each bind NAD(+). Glu-86 is a catalytic residue.

In terms of assembly, homooligomer; homooligomerization is required for activity.

Its subcellular location is the cytoplasm. The protein resides in the nucleus. It localises to the nucleoplasm. The catalysed reaction is NAD(+) + H2O = ADP-D-ribose + nicotinamide + H(+). The enzyme catalyses NADP(+) + H2O = ADP-D-ribose 2'-phosphate + nicotinamide + H(+). Disease resistance (R) protein that specifically recognizes the HopBA1 type III effector protein from P.syringae, and triggers cell death. Acts as a NAD(+) hydrolase (NADase): in response to pathogen-recognition, catalyzes cleavage of NAD(+) into ADP-D-ribose (ADPR) and nicotinamide; NAD(+) cleavage triggering a defense system that promotes cell death. In addition to ADPR, also generates a cyclization variant of cyclic ADPR (cADPR), termed v-cADPR, for which the cyclizing bond is unknown. Also able to hydrolyze NADP(+), but not other NAD(+)-related molecules. The chain is Disease resistance protein RBA1 from Arabidopsis thaliana (Mouse-ear cress).